Here is a 321-residue protein sequence, read N- to C-terminus: Manganese-dependent ADP-ribose/CDP-alcohol diphosphatase (321 aa).

Residues Asp-25, Gln-27, Asp-72, Asn-107, His-226, His-263, and His-265 each contribute to the Zn(2+) site.

The protein belongs to the ADPRibase-Mn family. Monomer. Requires Mg(2+) as cofactor.

The enzyme catalyses CDP-choline + H2O = phosphocholine + CMP + 2 H(+). It carries out the reaction ADP-D-ribose + H2O = D-ribose 5-phosphate + AMP + 2 H(+). It catalyses the reaction CDP-glycerol + H2O = sn-glycerol 3-phosphate + CMP + 2 H(+). Functionally, hydrolyzes ADP-ribose, IDP-ribose, CDP-glycerol, CDP-choline and CDP-ethanolamine, but not other non-reducing ADP-sugars or CDP-glucose. This is Manganese-dependent ADP-ribose/CDP-alcohol diphosphatase from Oryza sativa subsp. japonica (Rice).